We begin with the raw amino-acid sequence, 437 residues long: Dihydrofolate synthase/folylpolyglutamate synthase (437 aa).

28-30 (DLG) contributes to the 7,8-dihydropteroate binding site. Residue 58–61 (GKGT) participates in ATP binding. Ser82 is a Mg(2+) binding site. 120-123 (TYFE) provides a ligand contact to 7,8-dihydropteroate. Residue Glu144 coordinates Mg(2+). 151-153 (LDA) is a binding site for 7,8-dihydropteroate. His171 contacts Mg(2+). The ATP site is built by Asn255, Arg287, and Asp316.

Belongs to the folylpolyglutamate synthase family. In terms of assembly, monomer. It depends on Mg(2+) as a cofactor.

It catalyses the reaction 7,8-dihydropteroate + L-glutamate + ATP = 7,8-dihydrofolate + ADP + phosphate + H(+). The catalysed reaction is (6S)-5,6,7,8-tetrahydrofolyl-(gamma-L-Glu)(n) + L-glutamate + ATP = (6S)-5,6,7,8-tetrahydrofolyl-(gamma-L-Glu)(n+1) + ADP + phosphate + H(+). It carries out the reaction 10-formyltetrahydrofolyl-(gamma-L-Glu)(n) + L-glutamate + ATP = 10-formyltetrahydrofolyl-(gamma-L-Glu)(n+1) + ADP + phosphate + H(+). The enzyme catalyses (6R)-5,10-methylenetetrahydrofolyl-(gamma-L-Glu)(n) + L-glutamate + ATP = (6R)-5,10-methylenetetrahydrofolyl-(gamma-L-Glu)(n+1) + ADP + phosphate + H(+). It participates in cofactor biosynthesis; tetrahydrofolate biosynthesis; 7,8-dihydrofolate from 2-amino-4-hydroxy-6-hydroxymethyl-7,8-dihydropteridine diphosphate and 4-aminobenzoate: step 2/2. It functions in the pathway cofactor biosynthesis; tetrahydrofolylpolyglutamate biosynthesis. Its function is as follows. Functions in two distinct reactions of the de novo folate biosynthetic pathway. Catalyzes the addition of a glutamate residue to dihydropteroate (7,8-dihydropteroate or H2Pte) to form dihydrofolate (7,8-dihydrofolate monoglutamate or H2Pte-Glu). Also catalyzes successive additions of L-glutamate to tetrahydrofolate or 10-formyltetrahydrofolate or 5,10-methylenetetrahydrofolate, leading to folylpolyglutamate derivatives. This Haemophilus influenzae (strain ATCC 51907 / DSM 11121 / KW20 / Rd) protein is Dihydrofolate synthase/folylpolyglutamate synthase (folC).